A 154-amino-acid chain; its full sequence is 6,7-dimethyl-8-ribityllumazine synthase (154 aa).

5-amino-6-(D-ribitylamino)uracil contacts are provided by residues phenylalanine 21, 55 to 57, and 79 to 81; these read AFE and CVI. 84–85 serves as a coordination point for (2S)-2-hydroxy-3-oxobutyl phosphate; the sequence is AT. Histidine 87 (proton donor) is an active-site residue. Residue phenylalanine 112 participates in 5-amino-6-(D-ribitylamino)uracil binding. Arginine 126 is a binding site for (2S)-2-hydroxy-3-oxobutyl phosphate.

This sequence belongs to the DMRL synthase family. In terms of assembly, forms an icosahedral capsid composed of 60 subunits, arranged as a dodecamer of pentamers.

The enzyme catalyses (2S)-2-hydroxy-3-oxobutyl phosphate + 5-amino-6-(D-ribitylamino)uracil = 6,7-dimethyl-8-(1-D-ribityl)lumazine + phosphate + 2 H2O + H(+). It functions in the pathway cofactor biosynthesis; riboflavin biosynthesis; riboflavin from 2-hydroxy-3-oxobutyl phosphate and 5-amino-6-(D-ribitylamino)uracil: step 1/2. Functionally, catalyzes the formation of 6,7-dimethyl-8-ribityllumazine by condensation of 5-amino-6-(D-ribitylamino)uracil with 3,4-dihydroxy-2-butanone 4-phosphate. This is the penultimate step in the biosynthesis of riboflavin. This chain is 6,7-dimethyl-8-ribityllumazine synthase, found in Staphylococcus aureus (strain Newman).